The chain runs to 509 residues: Steroid 17-alpha-hydroxylase/17,20 lyase (509 aa).

Position 445 (Cys445) interacts with heme.

This sequence belongs to the cytochrome P450 family. Requires heme as cofactor.

The protein localises to the membrane. It catalyses the reaction a C21-steroid + reduced [NADPH--hemoprotein reductase] + O2 = a 17alpha-hydroxy-C21-steroid + oxidized [NADPH--hemoprotein reductase] + H2O + H(+). The catalysed reaction is 17alpha-hydroxyprogesterone + reduced [NADPH--hemoprotein reductase] + O2 = androst-4-ene-3,17-dione + acetate + oxidized [NADPH--hemoprotein reductase] + H2O + 2 H(+). It carries out the reaction 17alpha-hydroxypregnenolone + reduced [NADPH--hemoprotein reductase] + O2 = 3beta-hydroxyandrost-5-en-17-one + acetate + oxidized [NADPH--hemoprotein reductase] + H2O + 2 H(+). The protein operates within lipid metabolism; steroid biosynthesis. In terms of biological role, conversion of pregnenolone and progesterone to their 17-alpha-hydroxylated products and subsequently to dehydroepiandrosterone (DHEA) and androstenedione. Catalyzes both the 17-alpha-hydroxylation and the 17,20-lyase reaction. This chain is Steroid 17-alpha-hydroxylase/17,20 lyase (CYP17A1), found in Squalus acanthias (Spiny dogfish).